Consider the following 477-residue polypeptide: Glycogen synthase (477 aa).

Residue Lys15 participates in ADP-alpha-D-glucose binding.

Belongs to the glycosyltransferase 1 family. Bacterial/plant glycogen synthase subfamily.

The catalysed reaction is [(1-&gt;4)-alpha-D-glucosyl](n) + ADP-alpha-D-glucose = [(1-&gt;4)-alpha-D-glucosyl](n+1) + ADP + H(+). It participates in glycan biosynthesis; glycogen biosynthesis. Functionally, synthesizes alpha-1,4-glucan chains using ADP-glucose. The protein is Glycogen synthase of Shigella dysenteriae serotype 1 (strain Sd197).